The sequence spans 580 residues: Peptide transporter PTR_B (580 aa).

Positions 1-30 (MSTEKLQNDDKVVDEKYVDADEHSLVRSQD) are enriched in basic and acidic residues. The disordered stretch occupies residues 1–45 (MSTEKLQNDDKVVDEKYVDADEHSLVRSQDESFPQTEEGGEPTDH). Residues 57 to 78 (IPMSCWLVAIVELSERFTYYGL) traverse the membrane as a helical segment. A glycan (N-linked (GlcNAc...) asparagine) is linked at N101. Transmembrane regions (helical) follow at residues 107–127 (ALSY…AWIA), 134–154 (YFTI…LFIT), 163–183 (TTSL…TGGI), 219–239 (VSNV…SVIA), 249–269 (FWAA…ALVL), 326–346 (ALYA…YGQM), 370–390 (INSI…YPFI), 402–422 (IFWG…LQHF), 449–469 (IALQ…ASIT), 484–504 (SFIM…GIAL), and 513–533 (MVWT…IFWF).

The protein belongs to the major facilitator superfamily. Proton-dependent oligopeptide transporter (POT/PTR) (TC 2.A.17) family.

It localises to the cell membrane. The catalysed reaction is a dipeptide(out) + H(+)(out) = a dipeptide(in) + H(+)(in). It carries out the reaction an L-amino acid tripeptide(out) + H(+)(out) = an L-amino acid tripeptide(in) + H(+)(in). Its function is as follows. Peptide transporter that exploits the inwardly directed proton motive force to facilitate the cellular uptake of di/tripeptides. Shows strong uptake specificity towards the dipeptides Tyr-Phe and Gly-His, when compared to PTR_A and PTR_C. This chain is Peptide transporter PTR_B, found in Candidozyma auris (Yeast).